A 276-amino-acid chain; its full sequence is Diaminopimelate epimerase (276 aa).

Substrate-binding residues include Asn-13, Gln-46, and Asn-66. The active-site Proton donor is Cys-75. Residues Gly-76–Asn-77, Asn-159, Asn-192, and Glu-210–Arg-211 contribute to the substrate site. Cys-219 acts as the Proton acceptor in catalysis. Gly-220–Thr-221 provides a ligand contact to substrate.

Belongs to the diaminopimelate epimerase family. In terms of assembly, homodimer.

It localises to the cytoplasm. The catalysed reaction is (2S,6S)-2,6-diaminopimelate = meso-2,6-diaminopimelate. Its pathway is amino-acid biosynthesis; L-lysine biosynthesis via DAP pathway; DL-2,6-diaminopimelate from LL-2,6-diaminopimelate: step 1/1. Catalyzes the stereoinversion of LL-2,6-diaminopimelate (L,L-DAP) to meso-diaminopimelate (meso-DAP), a precursor of L-lysine and an essential component of the bacterial peptidoglycan. This is Diaminopimelate epimerase from Pseudomonas savastanoi pv. phaseolicola (strain 1448A / Race 6) (Pseudomonas syringae pv. phaseolicola (strain 1448A / Race 6)).